A 147-amino-acid chain; its full sequence is Hemoglobin subunit gamma-2 (147 aa).

The Globin domain occupies His3–His147. The residue at position 13 (Thr13) is a Phosphothreonine. A phosphoserine mark is found at Ser45, Ser51, and Ser53. Lys60 carries the post-translational modification N6-acetyllysine. His64 lines the heme b pocket. At Lys83 the chain carries N6-acetyllysine. Heme b is bound at residue His93. Residue Cys94 is modified to S-nitrosocysteine. Residues Ser140, Ser143, and Ser144 each carry the phosphoserine modification.

It belongs to the globin family. Heterotetramer of two alpha chains and two gamma chains in fetal hemoglobin (Hb F). In terms of tissue distribution, red blood cells.

Gamma chains make up the fetal hemoglobin F, in combination with alpha chains. This is Hemoglobin subunit gamma-2 (HBG2) from Hylobates lar (Lar gibbon).